Reading from the N-terminus, the 530-residue chain is 5-aminolevulinate synthase, mitochondrial (530 aa).

The N-terminal 26 residues, 1 to 26 (MFRPVLKVRPSFSYPYSIVSSRSVRL), are a transit peptide targeting the mitochondrion. Substrate contacts are provided by Arg73, Ser186, and Lys205. 3 residues coordinate pyridoxal 5'-phosphate: Ser238, His266, and Thr316. Lys319 is a catalytic residue. Position 319 is an N6-(pyridoxal phosphate)lysine (Lys319). Pyridoxal 5'-phosphate contacts are provided by Thr348 and Thr349. Thr434 contributes to the substrate binding site.

Belongs to the class-II pyridoxal-phosphate-dependent aminotransferase family. In terms of assembly, homodimer. It depends on pyridoxal 5'-phosphate as a cofactor.

It is found in the mitochondrion matrix. It carries out the reaction succinyl-CoA + glycine + H(+) = 5-aminolevulinate + CO2 + CoA. It functions in the pathway porphyrin-containing compound metabolism; protoporphyrin-IX biosynthesis; 5-aminolevulinate from glycine: step 1/1. Functionally, catalyzes the synthesis of 5-aminolevulinate (ALA) from succinyl-CoA and glycine, the first and rate-limiting step in heme biosynthesis. The protein is 5-aminolevulinate synthase, mitochondrial (HEM1) of Candida glabrata (strain ATCC 2001 / BCRC 20586 / JCM 3761 / NBRC 0622 / NRRL Y-65 / CBS 138) (Yeast).